The following is a 166-amino-acid chain: Small ribosomal subunit protein uS5 (166 aa).

The region spanning 12–75 (YIEKLVQVNR…EAARRNMIQV (64 aa)) is the S5 DRBM domain.

It belongs to the universal ribosomal protein uS5 family. Part of the 30S ribosomal subunit. Contacts proteins S4 and S8.

Its function is as follows. With S4 and S12 plays an important role in translational accuracy. In terms of biological role, located at the back of the 30S subunit body where it stabilizes the conformation of the head with respect to the body. The sequence is that of Small ribosomal subunit protein uS5 from Pseudomonas putida (strain ATCC 700007 / DSM 6899 / JCM 31910 / BCRC 17059 / LMG 24140 / F1).